The sequence spans 417 residues: Citrate synthase-related protein DDB_G0287281 (417 aa).

The segment at 284 to 317 is disordered; sequence NKNNNNNNNNNNNNNNNNNNNNNNNNSEDDDDDN. Positions 286–309 are enriched in low complexity; the sequence is NNNNNNNNNNNNNNNNNNNNNNNN.

The protein belongs to the citrate synthase family.

The polypeptide is Citrate synthase-related protein DDB_G0287281 (Dictyostelium discoideum (Social amoeba)).